The primary structure comprises 464 residues: Na(+)/H(+) antiporter NhaA 1 (464 aa).

Helical transmembrane passes span 41–61 (GGLI…SPLA), 85–105 (LHHW…GLEL), 121–141 (VLPI…YMSL), 150–170 (GWGI…ALLA), 180–200 (FLVA…AVFY), 207–227 (SFLI…MIGI), 234–254 (FFVG…ATLA), 329–349 (VAFF…IDFG), 363–383 (VVFG…WLAI), 399–419 (IIGA…IAEL), and 428–448 (IIQA…AGYL).

The protein belongs to the NhaA Na(+)/H(+) (TC 2.A.33) antiporter family.

The protein resides in the cell inner membrane. The catalysed reaction is Na(+)(in) + 2 H(+)(out) = Na(+)(out) + 2 H(+)(in). In terms of biological role, na(+)/H(+) antiporter that extrudes sodium in exchange for external protons. This is Na(+)/H(+) antiporter NhaA 1 from Saccharophagus degradans (strain 2-40 / ATCC 43961 / DSM 17024).